A 197-amino-acid polypeptide reads, in one-letter code: Ribonuclease HII (197 aa).

Positions 10–197 (ELIAGVDEVG…APVRKLLNTL (188 aa)) constitute an RNase H type-2 domain. Residues D16, E17, and D108 each coordinate a divalent metal cation.

It belongs to the RNase HII family. The cofactor is Mn(2+). It depends on Mg(2+) as a cofactor.

It is found in the cytoplasm. The enzyme catalyses Endonucleolytic cleavage to 5'-phosphomonoester.. Endonuclease that specifically degrades the RNA of RNA-DNA hybrids. The protein is Ribonuclease HII (rnhB) of Pasteurella multocida (strain Pm70).